We begin with the raw amino-acid sequence, 640 residues long: MELKPNGNHNNNNAAEKSEDTEKAKAERTNWGNGLEFLMSCISVSVGLGNVWRFPFTAYENGGGAFLIPYIIVLFLIGKPMYYLEMIMGQFTSQGTVKIWSICPGFVGVGYGQAFGTICIISYYSSLLALTLYYLFVSFQSELPWSFCREDWQNCVDSRPAEYTENLITGLASNASTLASNLTTPFSNRGVSLLADNETVKLQSSSEIYFLDVVIKEKLDISDGIGSPDWKLTLALLASWVVIFLVIMRGVKSSGKAAYFLALFPYVVLFVLLIRAVTLEGARDGIIFFLQPQWGELLNPTVWKNAVVQCFFSLAVGSGPIIMFASYNRFDHGIYRDAMIVTTLDTLTSLLGGITIFAILGNLAHNLNIENIQDVVRSGTGLAFISYPDAISKFQAVPQLFSVLFFFMLFVLGIGSIVALQSTIVTIICDQFKGLKYWKVALGTSMCGFLMGLVYVTPGGQWILTLVDFYGGTYVVFILAIFELAGIVWIYGLQNFCDDIEFMCNRRVSLYWRMCWSFFTPVMMIIIFIYSMVTIEPIKYSELYFPEAGNVAGWLLFGIGAAQFPLWGLWYVSRHREGSFCSSIMASLKPSEKWGPANAEVKREWQIFKSQKAAQRAVQKESSKLGFFWRKITNFCGSNI.

A compositionally biased stretch (low complexity) spans 1 to 13 (MELKPNGNHNNNN). Residues 1 to 25 (MELKPNGNHNNNNAAEKSEDTEKAK) are disordered. Over 1 to 30 (MELKPNGNHNNNNAAEKSEDTEKAKAERTN) the chain is Cytoplasmic. Positions 16–25 (EKSEDTEKAK) are enriched in basic and acidic residues. Transmembrane regions (helical) follow at residues 31–51 (WGNG…LGNV), 64–84 (GAFL…MYYL), and 117–137 (TICI…YLFV). N-linked (GlcNAc...) asparagine glycosylation is found at N174, N181, and N197. 9 helical membrane-spanning segments follow: residues 228 to 248 (PDWK…LVIM), 257 to 277 (AAYF…IRAV), 306 to 326 (AVVQ…MFAS), 340 to 360 (IVTT…FAIL), 400 to 420 (LFSV…IVAL), 447 to 467 (CGFL…LTLV), 473 to 493 (TYVV…IYGL), 515 to 535 (CWSF…MVTI), and 551 to 571 (VAGW…GLWY).

The protein belongs to the sodium:neurotransmitter symporter (SNF) (TC 2.A.22) family.

It is found in the membrane. In terms of biological role, unusual broad substrate spectrum amino acid:sodium cotransporter that promotes absorption of the D isomers of essential amino acids. Neutral amino acids are the preferred substrates, especially methionine and phenylalanine. This chain is Sodium-dependent nutrient amino acid transporter 1, found in Drosophila ananassae (Fruit fly).